A 47-amino-acid polypeptide reads, in one-letter code: Ribosome-inactivating protein luffin P1 (47 aa).

2 cysteine pairs are disulfide-bonded: Cys-12–Cys-33 and Cys-16–Cys-29.

Homotetramer.

The enzyme catalyses Endohydrolysis of the N-glycosidic bond at one specific adenosine on the 28S rRNA.. In terms of biological role, inhibits protein synthesis in animal cells. This is Ribosome-inactivating protein luffin P1 from Luffa aegyptiaca (Sponge gourd).